The chain runs to 118 residues: Beta-defensin 126 (118 aa).

Residues 1–20 (MKSLLFTLAVFMLLAQLVSG) form the signal peptide. Residues 21–63 (SWYVKKCLNDVGICKKKCKPEELHVKNGWAMCGKQRDCCVPAD) are in vitro binds to LPS, mediates antimicrobial activity and inhibits LPS-mediated inflammation. 3 cysteine pairs are disulfide-bonded: cysteine 27–cysteine 58, cysteine 34–cysteine 52, and cysteine 38–cysteine 59.

This sequence belongs to the beta-defensin family. Homodimer or homooligomer; disulfide-linked. O-glycosylated; glycans contain alpha(2,3)-linked sialic acids.

Its subcellular location is the secreted. Its function is as follows. Highly glycosylated atypical beta-defensin involved in several aspects of sperm function. Facilitates sperm transport in the female reproductive tract and contributes to sperm protection against immunodetection; both functions are probably implicating the negative surface charge provided by its O-linked oligosaccharides in the sperm glycocalyx. Involved in binding of sperm to oviductal epithelial cells to form a sperm reservoir until ovulation. Release from the sperm surface during capacitation and ovaluation by an elevation of oviductal fluid pH is unmasking other surface components and allows sperm to penetrate the cumulus matrix and bind to the zona pellucida of the oocyte. In vitro has antimicrobial activity and may inhibit LPS-mediated inflammation. The sequence is that of Beta-defensin 126 (DEFB126) from Pongo pygmaeus (Bornean orangutan).